Consider the following 207-residue polypeptide: Holliday junction branch migration complex subunit RuvA (207 aa).

Residues 1–63 are domain I; sequence MIGMLKGRVE…QDAITLFGFL (63 aa). The domain II stretch occupies residues 64-142; the sequence is DARSKRMFLQ…VDKIETGEPT (79 aa). The tract at residues 143–153 is flexible linker; it reads STQRIPTDKGV. Residues 153–207 form a domain III region; sequence VEQVVEGLMSLGWKQADAQQAVDSVISSSGIALPLEEGNVPTVLRLALTSLDRGR.

This sequence belongs to the RuvA family. As to quaternary structure, homotetramer. Forms an RuvA(8)-RuvB(12)-Holliday junction (HJ) complex. HJ DNA is sandwiched between 2 RuvA tetramers; dsDNA enters through RuvA and exits via RuvB. An RuvB hexamer assembles on each DNA strand where it exits the tetramer. Each RuvB hexamer is contacted by two RuvA subunits (via domain III) on 2 adjacent RuvB subunits; this complex drives branch migration. In the full resolvosome a probable DNA-RuvA(4)-RuvB(12)-RuvC(2) complex forms which resolves the HJ.

Its subcellular location is the cytoplasm. In terms of biological role, the RuvA-RuvB-RuvC complex processes Holliday junction (HJ) DNA during genetic recombination and DNA repair, while the RuvA-RuvB complex plays an important role in the rescue of blocked DNA replication forks via replication fork reversal (RFR). RuvA specifically binds to HJ cruciform DNA, conferring on it an open structure. The RuvB hexamer acts as an ATP-dependent pump, pulling dsDNA into and through the RuvAB complex. HJ branch migration allows RuvC to scan DNA until it finds its consensus sequence, where it cleaves and resolves the cruciform DNA. The protein is Holliday junction branch migration complex subunit RuvA of Bifidobacterium animalis subsp. lactis (strain AD011).